Consider the following 226-residue polypeptide: Uridylate kinase (226 aa).

Residue 6–10 (KISGK) coordinates ATP. Residue Gly-43 coordinates UMP. Gly-44 and Arg-48 together coordinate ATP. Residues Asp-65 and 113-119 (FQPGQST) each bind UMP. ATP is bound by residues Thr-139, Asn-140, Tyr-145, and Asp-148.

Belongs to the UMP kinase family. In terms of assembly, homohexamer.

It localises to the cytoplasm. It catalyses the reaction UMP + ATP = UDP + ADP. It functions in the pathway pyrimidine metabolism; CTP biosynthesis via de novo pathway; UDP from UMP (UMPK route): step 1/1. Its activity is regulated as follows. Inhibited by UTP. Functionally, catalyzes the reversible phosphorylation of UMP to UDP. The protein is Uridylate kinase of Saccharolobus islandicus (strain M.16.27) (Sulfolobus islandicus).